We begin with the raw amino-acid sequence, 358 residues long: Type II restriction enzyme HpaII (358 aa).

In terms of assembly, homodimer.

It carries out the reaction Endonucleolytic cleavage of DNA to give specific double-stranded fragments with terminal 5'-phosphates.. Its function is as follows. An E and P subtype restriction enzyme that recognizes the double-stranded sequence 5'-CCGG-3' and cleaves after C-1. The protein is Type II restriction enzyme HpaII of Haemophilus parainfluenzae.